A 224-amino-acid polypeptide reads, in one-letter code: Transmembrane emp24 domain-containing protein 7 (224 aa).

Positions 1–34 (MPRPGSAQRWAAVAGRWGCRLLALLLLVPGPGGA) are cleaved as a signal peptide. Over 35 to 187 (SEITFELPDN…RAEDLNTRVA (153 aa)) the chain is Lumenal. Positions 46-128 (KQCFYEDIAQ…HKTVYFDFQV (83 aa)) constitute a GOLD domain. An N-linked (GlcNAc...) asparagine glycan is attached at asparagine 103. The chain crosses the membrane as a helical span at residues 188–208 (YWSVGEALILLVVSIGQVFLL). Over 209–224 (KSFFSDKRTTTTRVGS) the chain is Cytoplasmic. The COPII vesicle coat-binding motif lies at 211–212 (FF). The short motif at 211–224 (FFSDKRTTTTRVGS) is the COPI vesicle coat-binding element.

Belongs to the EMP24/GP25L family. Predominantly monomeric and to lesser extent homodimeric in endoplasmic reticulum, endoplasmic reticulum-Golgi intermediate compartment and cis-Golgi network. Oligomerizes with other members of the EMP24/GP25L family such as TMED2, TMED9 and TMED10. Interacts (via C-terminus) with COPG1; the interaction involves dimeric TMED7. N-linked glycosylated in complex form containing terminal sialic acid.

The protein resides in the endoplasmic reticulum membrane. Its subcellular location is the golgi apparatus. It localises to the cis-Golgi network membrane. It is found in the endoplasmic reticulum-Golgi intermediate compartment membrane. The protein localises to the cytoplasmic vesicle. The protein resides in the COPI-coated vesicle membrane. Its subcellular location is the COPII-coated vesicle membrane. Its function is as follows. Potential role in vesicular protein trafficking, mainly in the early secretory pathway. Appears to play a role in the biosynthesis of secreted cargo including processing and post-translational modifications. This is Transmembrane emp24 domain-containing protein 7 (TMED7) from Homo sapiens (Human).